Reading from the N-terminus, the 206-residue chain is Thymidylate kinase (206 aa).

11–18 (GIDGAGKT) is a binding site for ATP.

Belongs to the thymidylate kinase family.

It catalyses the reaction dTMP + ATP = dTDP + ADP. Its function is as follows. Phosphorylation of dTMP to form dTDP in both de novo and salvage pathways of dTTP synthesis. The sequence is that of Thymidylate kinase from Burkholderia cenocepacia (strain HI2424).